The chain runs to 137 residues: MSIIKEFREFAMRGNVVDLAVGVIIGAAFGKIVSSLVADIIMPPLGLLIGGIDFKQFAVTLREAQGDIPAVVMHYGVFIQNVFDFLIVAFAIFMAIKLINKLNRKKEEPAAATPAPTKEEVLLTEIRDLLKEQNNRS.

Transmembrane regions (helical) follow at residues 10 to 30 (FAMR…AAFG) and 76 to 96 (GVFI…FMAI).

The protein belongs to the MscL family. In terms of assembly, homopentamer.

Its subcellular location is the cell inner membrane. In terms of biological role, channel that opens in response to stretch forces in the membrane lipid bilayer. May participate in the regulation of osmotic pressure changes within the cell. In Escherichia coli O45:K1 (strain S88 / ExPEC), this protein is Large-conductance mechanosensitive channel.